We begin with the raw amino-acid sequence, 506 residues long: Allantoinase (506 aa).

Zn(2+) is bound by residues His105, His107, Lys195, His231, His292, and Asp366. Lys195 carries the post-translational modification N6-carboxylysine.

It belongs to the metallo-dependent hydrolases superfamily. Allantoinase family. Homotetramer. Zn(2+) is required as a cofactor. Carboxylation allows a single lysine to coordinate two zinc ions.

It catalyses the reaction (S)-allantoin + H2O = allantoate + H(+). Its pathway is nitrogen metabolism; (S)-allantoin degradation; allantoate from (S)-allantoin: step 1/1. Functionally, catalyzes the conversion of allantoin (5-ureidohydantoin) to allantoate by hydrolytic cleavage of the five-member hydantoin ring. Catalyzes the first step of the ureide allantoin degradation followed by the sequential activity of AAH, UGLYAH and UAH which allows a complete purine breakdown without the intermediate generation of urea. The sequence is that of Allantoinase (ALN) from Arabidopsis thaliana (Mouse-ear cress).